Here is a 104-residue protein sequence, read N- to C-terminus: UPF0147 protein MK1586 (104 aa).

It belongs to the UPF0147 family.

The sequence is that of UPF0147 protein MK1586 from Methanopyrus kandleri (strain AV19 / DSM 6324 / JCM 9639 / NBRC 100938).